Consider the following 872-residue polypeptide: Eukaryotic translation initiation factor 3 subunit C (872 aa).

Positions 1–100 (MSRFFRGGDD…KVKSAKDKRF (100 aa)) are disordered. Acidic residues-rich tracts occupy residues 16-59 (SSEE…DEEE) and 72-87 (SDDE…SDDE). Basic and acidic residues predominate over residues 88–100 (ATTKVKSAKDKRF). The region spanning 613 to 787 (FHMHINLELL…ETVIFRKGVE (175 aa)) is the PCI domain. The segment at 812-872 (TLEQKTQGSA…GGALGNAVRG (61 aa)) is disordered. The span at 831–848 (GGGQRGGGQRGGRGGART) shows a compositional bias: gly residues.

Belongs to the eIF-3 subunit C family. In terms of assembly, component of the eukaryotic translation initiation factor 3 (eIF-3) complex.

Its subcellular location is the cytoplasm. Component of the eukaryotic translation initiation factor 3 (eIF-3) complex, which is involved in protein synthesis of a specialized repertoire of mRNAs and, together with other initiation factors, stimulates binding of mRNA and methionyl-tRNAi to the 40S ribosome. The eIF-3 complex specifically targets and initiates translation of a subset of mRNAs involved in cell proliferation. This is Eukaryotic translation initiation factor 3 subunit C (nip-1) from Neurospora crassa (strain ATCC 24698 / 74-OR23-1A / CBS 708.71 / DSM 1257 / FGSC 987).